The following is a 185-amino-acid chain: Large ribosomal subunit protein uL6 (185 aa).

The protein belongs to the universal ribosomal protein uL6 family. Part of the 50S ribosomal subunit.

In terms of biological role, this protein binds to the 23S rRNA, and is important in its secondary structure. It is located near the subunit interface in the base of the L7/L12 stalk, and near the tRNA binding site of the peptidyltransferase center. This chain is Large ribosomal subunit protein uL6, found in Staphylothermus marinus (strain ATCC 43588 / DSM 3639 / JCM 9404 / F1).